Here is a 510-residue protein sequence, read N- to C-terminus: Light-independent protochlorophyllide reductase subunit B (510 aa).

Aspartate 36 serves as a coordination point for [4Fe-4S] cluster. The active-site Proton donor is aspartate 297. 432-433 lines the substrate pocket; sequence GM.

This sequence belongs to the ChlB/BchB/BchZ family. In terms of assembly, protochlorophyllide reductase is composed of three subunits; ChlL, ChlN and ChlB. Forms a heterotetramer of two ChlB and two ChlN subunits. [4Fe-4S] cluster is required as a cofactor.

Its subcellular location is the plastid. The protein resides in the chloroplast. It catalyses the reaction chlorophyllide a + oxidized 2[4Fe-4S]-[ferredoxin] + 2 ADP + 2 phosphate = protochlorophyllide a + reduced 2[4Fe-4S]-[ferredoxin] + 2 ATP + 2 H2O. It functions in the pathway porphyrin-containing compound metabolism; chlorophyll biosynthesis (light-independent). Its function is as follows. Component of the dark-operative protochlorophyllide reductase (DPOR) that uses Mg-ATP and reduced ferredoxin to reduce ring D of protochlorophyllide (Pchlide) to form chlorophyllide a (Chlide). This reaction is light-independent. The NB-protein (ChlN-ChlB) is the catalytic component of the complex. In Pinus koraiensis (Korean pine), this protein is Light-independent protochlorophyllide reductase subunit B.